Consider the following 285-residue polypeptide: tRNA pseudouridine synthase B (285 aa).

Asp-38 (nucleophile) is an active-site residue.

The protein belongs to the pseudouridine synthase TruB family. Type 1 subfamily.

The enzyme catalyses uridine(55) in tRNA = pseudouridine(55) in tRNA. In terms of biological role, responsible for synthesis of pseudouridine from uracil-55 in the psi GC loop of transfer RNAs. The chain is tRNA pseudouridine synthase B from Geobacillus kaustophilus (strain HTA426).